Reading from the N-terminus, the 170-residue chain is Transcriptional repressor NrdR (170 aa).

A zinc finger lies at 3 to 34 (CPFCRHPDSRVVDSRTSEDGSSIRRRRQCPEC). The ATP-cone domain occupies 46–136 (LSVVKRSGVA…VYRGFSSLED (91 aa)). Residues 148-170 (RENEGDPDADGSADAPVRLTTSV) are disordered.

It belongs to the NrdR family. Requires Zn(2+) as cofactor.

Functionally, negatively regulates transcription of bacterial ribonucleotide reductase nrd genes and operons by binding to NrdR-boxes. The polypeptide is Transcriptional repressor NrdR (Beutenbergia cavernae (strain ATCC BAA-8 / DSM 12333 / CCUG 43141 / JCM 11478 / NBRC 16432 / NCIMB 13614 / HKI 0122)).